The sequence spans 309 residues: Foldase protein PrsA 2 (309 aa).

The signal sequence occupies residues 1-22; the sequence is MKQMNKLITGVVTLATVVTLSA. Residue cysteine 23 is the site of N-palmitoyl cysteine attachment. Cysteine 23 is lipidated: S-diacylglycerol cysteine. In terms of domain architecture, PpiC spans 146–241; it reads TPTMTAEIMQ…RTYHIIKVTK (96 aa).

The protein belongs to the PrsA family.

Its subcellular location is the cell membrane. It catalyses the reaction [protein]-peptidylproline (omega=180) = [protein]-peptidylproline (omega=0). Plays a major role in protein secretion by helping the post-translocational extracellular folding of several secreted proteins. The chain is Foldase protein PrsA 2 (prsA2) from Streptococcus pyogenes serotype M1.